Consider the following 310-residue polypeptide: Thioesterase pytI (310 aa).

Transmembrane regions (helical) follow at residues 14–34 (SLTPLILIHAISGLALPYFAL) and 95–115 (LLGGWSMGGMLAIEMAAIFVA). Residues 168–195 (TLSDDASTTTSSDNSRASTDHGADSEVE) are disordered. Residues 170–184 (SDDASTTTSSDNSRA) are compositionally biased toward low complexity.

The protein belongs to the AMT4 thioesterase family.

It is found in the membrane. It functions in the pathway secondary metabolite biosynthesis. Thioesterase; part of the gene cluster that mediates the biosynthesis of pyranterreones, a family of antioxidative compounds. The first step of pyranonigrins biosynthesis is performed by the hybrid PKS-NRPS synthetase pytA that condenses 4 malonyl-CoA units ato the acetyl starter unit by the modular PKS of pytA. The acyl chain is then connected to an L-serine through the amide bond by the modular NRPS of pytA. A tetramic acid is formed and released from the PKS-NRPS pytA to give pyranterreone 5 with the help of the thioesterase pytI. Pyranterreone 5 could be methylated by pytC to afford pyranterreone 6. Both pyranterreones 5 and 6 are subsequently oxidized by the FAD-linked oxidoreductase pytB and the cytochrome P450 monooxygenase pytD to form the fused gamma-pyrone core, resulting in pyranterreones 7 and 11, respectively. The hydroxy group at C-8 of pyranterreones 7 and 11 are dehydrated by the aspartyl protease pytH to form a delta-7 double bond to give pyranterreones 3 and 1, 2 accordingly. The exo-methylene of pyranterreone 3 could be reduced into a pendant methyl by reductase pytE to provide pyranterreone 4, also known as cordylactam. Pyranterreone 4 can be reconverted to pyranterreone 3 through pytB-catalyzed dehydrogenation or further oxidized to pyranterreones 9 and 10. The sequence is that of Thioesterase pytI from Aspergillus terreus.